Reading from the N-terminus, the 337-residue chain is D-lactate dehydrogenase (337 aa).

Residues 156–157 (HI), Asp176, 207–208 (VP), Asn213, 234–236 (CSR), and Asp260 each bind NAD(+). Arg236 is a catalytic residue. The active site involves Glu265. The Proton donor role is filled by His297.

Belongs to the D-isomer specific 2-hydroxyacid dehydrogenase family. As to quaternary structure, homodimer.

It catalyses the reaction (R)-lactate + NAD(+) = pyruvate + NADH + H(+). The sequence is that of D-lactate dehydrogenase from Lactobacillus helveticus (Lactobacillus suntoryeus).